The chain runs to 159 residues: 6,7-dimethyl-8-ribityllumazine synthase (159 aa).

Residues phenylalanine 22, 57-59, and 81-83 each bind 5-amino-6-(D-ribitylamino)uracil; these read TYE and TII. Position 86-87 (86-87) interacts with (2S)-2-hydroxy-3-oxobutyl phosphate; that stretch reads ST. The active-site Proton donor is the histidine 89. Methionine 114 serves as a coordination point for 5-amino-6-(D-ribitylamino)uracil. (2S)-2-hydroxy-3-oxobutyl phosphate is bound at residue arginine 128.

The protein belongs to the DMRL synthase family. As to quaternary structure, forms an icosahedral capsid composed of 60 subunits, arranged as a dodecamer of pentamers.

The enzyme catalyses (2S)-2-hydroxy-3-oxobutyl phosphate + 5-amino-6-(D-ribitylamino)uracil = 6,7-dimethyl-8-(1-D-ribityl)lumazine + phosphate + 2 H2O + H(+). Its pathway is cofactor biosynthesis; riboflavin biosynthesis; riboflavin from 2-hydroxy-3-oxobutyl phosphate and 5-amino-6-(D-ribitylamino)uracil: step 1/2. In terms of biological role, catalyzes the formation of 6,7-dimethyl-8-ribityllumazine by condensation of 5-amino-6-(D-ribitylamino)uracil with 3,4-dihydroxy-2-butanone 4-phosphate. This is the penultimate step in the biosynthesis of riboflavin. This chain is 6,7-dimethyl-8-ribityllumazine synthase, found in Buchnera aphidicola subsp. Schizaphis graminum (strain Sg).